Here is a 350-residue protein sequence, read N- to C-terminus: Protein Wnt-2 (350 aa).

An N-terminal signal peptide occupies residues Met1–Ala25. 11 disulfide bridges follow: Cys74-Cys85, Cys125-Cys133, Cys135-Cys155, Cys204-Cys218, Cys206-Cys213, Cys276-Cys307, Cys292-Cys302, Cys306-Cys346, Cys322-Cys337, Cys324-Cys334, and Cys329-Cys330. Residue Asn132 is glycosylated (N-linked (GlcNAc...) asparagine). Ser210 carries O-palmitoleoyl serine; by PORCN lipidation. Asn293 carries an N-linked (GlcNAc...) asparagine glycan.

Belongs to the Wnt family. Palmitoleoylation is required for efficient binding to frizzled receptors. Depalmitoleoylation leads to Wnt signaling pathway inhibition.

It is found in the secreted. The protein resides in the extracellular space. It localises to the extracellular matrix. In terms of biological role, ligand for members of the frizzled family of seven transmembrane receptors. Functions in the canonical Wnt signaling pathway that results in activation of transcription factors of the TCF/LEF family. The chain is Protein Wnt-2 (wnt2) from Danio rerio (Zebrafish).